Reading from the N-terminus, the 408-residue chain is Putative gustatory receptor 58b (408 aa).

Residues Met-1–Thr-44 lie on the Cytoplasmic side of the membrane. Residues Tyr-45–Pro-65 traverse the membrane as a helical segment. Residues Arg-66–Asn-82 lie on the Extracellular side of the membrane. Residues Phe-83–Leu-103 form a helical membrane-spanning segment. At Lys-104–Ile-150 the chain is on the cytoplasmic side. A helical membrane pass occupies residues Ile-151–Ile-171. Over Asn-172 to Lys-193 the chain is Extracellular. The helical transmembrane segment at Met-194–Ile-214 threads the bilayer. The Cytoplasmic segment spans residues Asn-215–Arg-245. Residues Ile-246 to Ile-266 form a helical membrane-spanning segment. Residues Asn-267–Gly-284 are Extracellular-facing. Asn-277 carries an N-linked (GlcNAc...) asparagine glycan. Residues Trp-285–Met-305 form a helical membrane-spanning segment. The Cytoplasmic segment spans residues Glu-306 to Pro-364. Residues Ala-365 to Leu-385 form a helical membrane-spanning segment. The Extracellular segment spans residues Arg-386–Val-408. N-linked (GlcNAc...) asparagine glycosylation occurs at Asn-404.

This sequence belongs to the insect chemoreceptor superfamily. Gustatory receptor (GR) family. Gr22e subfamily. In terms of tissue distribution, expressed in the adult labellar chemosensory neurons, labral sense organ and thorax. In larvae, is in neurons of the terminal external chemosensory organ as well as in the dorsal pharyngeal sense organ.

The protein localises to the cell membrane. Functionally, probable gustatory receptor which mediates acceptance or avoidance behavior, depending on its substrates. This Drosophila melanogaster (Fruit fly) protein is Putative gustatory receptor 58b (Gr58b).